A 284-amino-acid chain; its full sequence is Pantothenate synthetase (284 aa).

32–39 is a binding site for ATP; that stretch reads MGALHEGH. Histidine 39 serves as the catalytic Proton donor. (R)-pantoate is bound at residue glutamine 63. Glutamine 63 serves as a coordination point for beta-alanine. 149–152 provides a ligand contact to ATP; the sequence is GEKD. Glutamine 155 provides a ligand contact to (R)-pantoate. Residues valine 178 and 186–189 each bind ATP; that span reads LSSR.

Belongs to the pantothenate synthetase family. Homodimer.

The protein resides in the cytoplasm. It catalyses the reaction (R)-pantoate + beta-alanine + ATP = (R)-pantothenate + AMP + diphosphate + H(+). The protein operates within cofactor biosynthesis; (R)-pantothenate biosynthesis; (R)-pantothenate from (R)-pantoate and beta-alanine: step 1/1. In terms of biological role, catalyzes the condensation of pantoate with beta-alanine in an ATP-dependent reaction via a pantoyl-adenylate intermediate. The sequence is that of Pantothenate synthetase from Chelativorans sp. (strain BNC1).